The following is a 175-amino-acid chain: Glucagon family neuropeptides (175 aa).

A signal peptide spans Met1–Val23. Positions Tyr24–Gly80 are excised as a propeptide. The tract at residues Val149–Leu157 is important for receptor binding. Leucine amide is present on Leu157. Residue Lys168 is modified to Lysine amide. Positions Val172 to Leu175 are excised as a propeptide.

It belongs to the glucagon family.

The protein localises to the secreted. In terms of biological role, primary role of GRF is to release GH from the pituitary. PACAP is a neuropeptide involved in diverse array of physiological processes through activating the PACAP subfamily of class B1 G protein-coupled receptors: VIP receptor 1 (VIPR1), VIP receptor 2 (VIPR2), and PACAP type I receptor (ADCYAP1R1). Exerts neuroprotective and general cytoprotective effects due to anti-apoptotic, anti-inflammatory, and antioxidant actions. Promotes neuron projection development through the RAPGEF2/Rap1/B-Raf/ERK pathway. In chromaffin cells, induces long-lasting increase of intracellular calcium concentrations and neuroendocrine secretion. Involved in the control of glucose homeostasis, induces insulin secretion by pancreatic beta cells. PACAP exists in two bioactive forms from proteolysis of the same precursor protein, PACAP27 and PACAP38, which differ by eleven amino acid residues in the C-terminus. The chain is Glucagon family neuropeptides (ADCYAP1) from Gallus gallus (Chicken).